We begin with the raw amino-acid sequence, 522 residues long: Aspartic and glutamic acid-rich protein (522 aa).

The N-terminal stretch at 1–16 (MKVFVYLLVTFSLTNA) is a signal peptide. Composition is skewed to basic and acidic residues over residues 72-81 (YDDFFPKDTS) and 93-102 (SRNDDGYDLA). Positions 72–497 (YDDFFPKDTS…KSKDAAQGNI (426 aa)) are disordered. The span at 109–125 (DDEEAYDDFDEVDDRAD) shows a compositional bias: acidic residues. The span at 142–152 (KLPAEEESKND) shows a compositional bias: basic and acidic residues. 4 stretches are compositionally biased toward acidic residues: residues 153-166 (MDEETFEDEPEEDK), 173-200 (FAEDERADEREDDDADFDFNDEEDEDEV), 228-261 (DNEEEYADESDDEAEEDSEETADDFEDDPEDESD), and 267-283 (EVEDESEENYQDDTEEG). Over residues 284 to 343 (SEIKQNDETEEQPEKKFDADKEHEDAPEPLKEKLSDESKARAEDESDKSEDAAKEIKEPE) the composition is skewed to basic and acidic residues. A coiled-coil region spans residues 319–465 (DESKARAEDE…KSNLALKRDE (147 aa)). The segment covering 358 to 374 (DEAELLDDEAELSDDEA) has biased composition (acidic residues). Basic and acidic residues-rich tracts occupy residues 375 to 397 (ELSKDEAEQSSDEAEKSEDKAEK), 407 to 453 (DEAK…EFAK), and 461 to 491 (LKRDENRPLAKGLRESAAHLRDFPSEKKSKD).

In terms of tissue distribution, component of the acid-soluble organic matrix of the aragonitic skeleton (at protein level).

The protein localises to the secreted. The protein is Aspartic and glutamic acid-rich protein of Acropora millepora (Staghorn coral).